The following is a 90-amino-acid chain: Translation initiation factor IF-1 (90 aa).

An S1-like domain is found at 15 to 90 (KKQKRKKEEV…TLGRIVFRHK (76 aa)).

It belongs to the IF-1 family. In terms of assembly, component of the 30S ribosomal translation pre-initiation complex which assembles on the 30S ribosome in the order IF-2 and IF-3, IF-1 and N-formylmethionyl-tRNA(fMet); mRNA recruitment can occur at any time during PIC assembly.

It localises to the cytoplasm. In terms of biological role, one of the essential components for the initiation of protein synthesis. Stabilizes the binding of IF-2 and IF-3 on the 30S subunit to which N-formylmethionyl-tRNA(fMet) subsequently binds. Helps modulate mRNA selection, yielding the 30S pre-initiation complex (PIC). Upon addition of the 50S ribosomal subunit IF-1, IF-2 and IF-3 are released leaving the mature 70S translation initiation complex. The polypeptide is Translation initiation factor IF-1 (Mycoplasma sp).